Here is a 331-residue protein sequence, read N- to C-terminus: Vitamin B12 import system permease protein BtuC (331 aa).

Transmembrane regions (helical) follow at residues 20–42 (LLIG…WLSP), 62–84 (LLAA…VLLG), 91–113 (GVVG…FPSL), 117–136 (VAFM…LLVV), 148–170 (LLLV…FYFS), 190–209 (SWYQ…WLVL), 240–262 (LAIA…VGLV), 277–299 (LLLP…IARL), and 306–325 (LPLG…WMLV).

This sequence belongs to the binding-protein-dependent transport system permease family. FecCD subfamily. In terms of assembly, the complex is composed of two ATP-binding proteins (BtuD), two transmembrane proteins (BtuC) and a solute-binding protein (BtuF).

Its subcellular location is the cell inner membrane. In terms of biological role, part of the ABC transporter complex BtuCDF involved in vitamin B12 import. Involved in the translocation of the substrate across the membrane. This chain is Vitamin B12 import system permease protein BtuC, found in Vibrio cholerae serotype O1 (strain ATCC 39315 / El Tor Inaba N16961).